Here is a 181-residue protein sequence, read N- to C-terminus: Bradykinin potentiating and C-type natriuretic peptides (181 aa).

Positions 1–23 (MFVSRLAASGLLLLALLAVSLDG) are cleaved as a signal peptide. Residues 24 to 27 (KPLQ) constitute a propeptide that is removed on maturation. Residues glutamine 28 and glutamine 31 each carry the pyrrolidone carboxylic acid modification. A propeptide spanning residues 41-43 (LVV) is cleaved from the precursor. Position 44 is a pyrrolidone carboxylic acid (glutamine 44). Residues 50 to 52 (TQL) constitute a propeptide that is removed on maturation. Residue glutamine 53 is modified to Pyrrolidone carboxylic acid. The propeptide occupies 59–159 (AGGTTALREE…ARRLKGLAKK (101 aa)). The disordered stretch occupies residues 74–150 (EAALDTPPAG…GGGCGGGGGA (77 aa)). The span at 104–114 (SKGASATSAAS) shows a compositional bias: low complexity. Over residues 140–150 (AGGGCGGGGGA) the composition is skewed to gly residues. Cysteine 165 and cysteine 181 are disulfide-bonded.

In the N-terminal section; belongs to the bradykinin-potentiating peptide family. The protein in the C-terminal section; belongs to the natriuretic peptide family. In terms of tissue distribution, venom gland.

The protein localises to the secreted. Bradykinin-potentiating peptide both inhibits the activity of the angiotensin-converting enzyme (ACE) and enhances the action of bradykinin by inhibiting the peptidases that inactivate it. It acts as an indirect hypotensive agent. Synthetic Cdt1a, Cdt1b and the short hexapeptide Cdt3 are able to potentiate the hypotensive effect mediated by Bk on the blood pressure of anesthetized rats. Functionally, has a vasorelaxant activity in rat aortic strips and a diuretic potency in anesthetized rats. May act by activating natriuretic receptors (NPR1 and/or NPR2). The polypeptide is Bradykinin potentiating and C-type natriuretic peptides (Crotalus durissus terrificus (South American rattlesnake)).